A 221-amino-acid chain; its full sequence is Thiamine-phosphate synthase (221 aa).

Residues 44-48 (QFREK) and asparagine 79 contribute to the 4-amino-2-methyl-5-(diphosphooxymethyl)pyrimidine site. Residues aspartate 80 and aspartate 99 each contribute to the Mg(2+) site. 4-amino-2-methyl-5-(diphosphooxymethyl)pyrimidine is bound at residue serine 117. 2-[(2R,5Z)-2-carboxy-4-methylthiazol-5(2H)-ylidene]ethyl phosphate is bound at residue 143 to 145 (TSS). Lysine 146 lines the 4-amino-2-methyl-5-(diphosphooxymethyl)pyrimidine pocket. 2-[(2R,5Z)-2-carboxy-4-methylthiazol-5(2H)-ylidene]ethyl phosphate-binding positions include glycine 175 and 195-196 (IS).

This sequence belongs to the thiamine-phosphate synthase family. The cofactor is Mg(2+).

It carries out the reaction 2-[(2R,5Z)-2-carboxy-4-methylthiazol-5(2H)-ylidene]ethyl phosphate + 4-amino-2-methyl-5-(diphosphooxymethyl)pyrimidine + 2 H(+) = thiamine phosphate + CO2 + diphosphate. The catalysed reaction is 2-(2-carboxy-4-methylthiazol-5-yl)ethyl phosphate + 4-amino-2-methyl-5-(diphosphooxymethyl)pyrimidine + 2 H(+) = thiamine phosphate + CO2 + diphosphate. The enzyme catalyses 4-methyl-5-(2-phosphooxyethyl)-thiazole + 4-amino-2-methyl-5-(diphosphooxymethyl)pyrimidine + H(+) = thiamine phosphate + diphosphate. It participates in cofactor biosynthesis; thiamine diphosphate biosynthesis; thiamine phosphate from 4-amino-2-methyl-5-diphosphomethylpyrimidine and 4-methyl-5-(2-phosphoethyl)-thiazole: step 1/1. Its function is as follows. Condenses 4-methyl-5-(beta-hydroxyethyl)thiazole monophosphate (THZ-P) and 2-methyl-4-amino-5-hydroxymethyl pyrimidine pyrophosphate (HMP-PP) to form thiamine monophosphate (TMP). The protein is Thiamine-phosphate synthase of Geobacillus kaustophilus (strain HTA426).